A 706-amino-acid chain; its full sequence is Fatty acid oxidation complex subunit alpha (706 aa).

Residues 1–188 (MEKTFNLTRR…KMGLVNDVVP (188 aa)) are enoyl-CoA hydratase. The interval 308 to 706 (RKVKKAVILG…TMARENVSFF (399 aa)) is 3-hydroxyacyl-CoA dehydrogenase.

In the N-terminal section; belongs to the enoyl-CoA hydratase/isomerase family. This sequence in the central section; belongs to the 3-hydroxyacyl-CoA dehydrogenase family. Heterotetramer of two alpha chains (FadJ) and two beta chains (FadI).

The protein resides in the cytoplasm. It carries out the reaction a (3S)-3-hydroxyacyl-CoA = a (2E)-enoyl-CoA + H2O. It catalyses the reaction a 4-saturated-(3S)-3-hydroxyacyl-CoA = a (3E)-enoyl-CoA + H2O. The enzyme catalyses a (3S)-3-hydroxyacyl-CoA + NAD(+) = a 3-oxoacyl-CoA + NADH + H(+). The catalysed reaction is (3S)-3-hydroxybutanoyl-CoA = (3R)-3-hydroxybutanoyl-CoA. It participates in lipid metabolism; fatty acid beta-oxidation. In terms of biological role, catalyzes the formation of a hydroxyacyl-CoA by addition of water on enoyl-CoA. Also exhibits 3-hydroxyacyl-CoA epimerase and 3-hydroxyacyl-CoA dehydrogenase activities. The protein is Fatty acid oxidation complex subunit alpha of Shewanella sp. (strain W3-18-1).